A 740-amino-acid chain; its full sequence is Alpha-1,6-mannosylglycoprotein 6-beta-N-acetylglucosaminyltransferase A (740 aa).

Over 1–13 the chain is Cytoplasmic; the sequence is MAFFSPWKLSSQK. A helical; Signal-anchor for type II membrane protein membrane pass occupies residues 14 to 30; sequence LGFFLVTFGFIWGMMLL. Topologically, residues 31 to 740 are lumenal; sequence HFTIQQRTQP…GQVALCKDCL (710 aa). N-linked (GlcNAc...) asparagine glycans are attached at residues N109, N114, and N117. Intrachain disulfides connect C144–C182, C155–C195, C171–C337, C371–C625, C648–C723, C652–C725, C659–C712, C680–C701, and C736–C739. A sufficient for catalytic activity region spans residues 212-740; that stretch reads NSLAEIRTDF…GQVALCKDCL (529 aa). N333 carries an N-linked (GlcNAc...) asparagine glycan. 377–378 provides a ligand contact to substrate; it reads DS. N-linked (GlcNAc...) asparagine glycosylation is found at N432 and N446. E525 is a binding site for UDP-N-acetyl-alpha-D-glucosamine. Residue K553 participates in substrate binding.

This sequence belongs to the glycosyltransferase 18 family. In terms of processing, N-glycosylated. A secreted form is released from the membrane after cleavage by gamma-secretase. As to expression, detected in cerebellum.

It localises to the golgi apparatus membrane. The protein localises to the perikaryon. Its subcellular location is the secreted. The catalysed reaction is N(4)-{beta-D-GlcNAc-(1-&gt;2)-[beta-D-GlcNAc-(1-&gt;4)]-alpha-D-Man-(1-&gt;3)-[beta-D-GlcNAc-(1-&gt;2)-alpha-D-Man-(1-&gt;6)]-beta-D-Man-(1-&gt;4)-beta-D-GlcNAc-(1-&gt;4)-beta-D-GlcNAc}-L-asparaginyl-[protein] + UDP-N-acetyl-alpha-D-glucosamine = N(4)-{beta-D-GlcNAc-(1-&gt;2)-[beta-D-GlcNAc-(1-&gt;4)]-alpha-D-Man-(1-&gt;3)-[beta-D-GlcNAc-(1-&gt;2)-[beta-D-GlcNAc-(1-&gt;6)]-alpha-D-Man-(1-&gt;6)]-beta-D-Man-(1-&gt;4)-beta-D-GlcNAc-(1-&gt;4)-beta-D-GlcNAc}-L-asparaginyl-[protein] + UDP + H(+). Its pathway is protein modification; protein glycosylation. Catalyzes the addition of N-acetylglucosamine (GlcNAc) in beta 1-6 linkage to the alpha-linked mannose of biantennary N-linked oligosaccharides. Catalyzes an important step in the biosynthesis of branched, complex-type N-glycans, such as those found on EGFR, TGFR (TGF-beta receptor) and CDH2. Via its role in the biosynthesis of complex N-glycans, plays an important role in the activation of cellular signaling pathways, reorganization of the actin cytoskeleton, cell-cell adhesion and cell migration. MGAT5-dependent EGFR N-glycosylation enhances the interaction between EGFR and LGALS3 and thereby prevents rapid EGFR endocytosis and prolongs EGFR signaling. Required for efficient interaction between TGFB1 and its receptor. Enhances activation of intracellular signaling pathways by several types of growth factors, including FGF2, PDGF, IGF, TGFB1 and EGF. MGAT5-dependent CDH2 N-glycosylation inhibits CDH2-mediated homotypic cell-cell adhesion and contributes to the regulation of downstream signaling pathways. Promotes cell migration. Contributes to the regulation of the inflammatory response. MGAT5-dependent TCR N-glycosylation enhances the interaction between TCR and LGALS3, limits agonist-induced TCR clustering, and thereby dampens TCR-mediated responses to antigens. Required for normal leukocyte evasation and accumulation at sites of inflammation. Inhibits attachment of monocytes to the vascular endothelium and subsequent monocyte diapedesis. In terms of biological role, promotes proliferation of umbilical vein endothelial cells and angiogenesis, at least in part by promoting the release of the growth factor FGF2 from the extracellular matrix. This Mus musculus (Mouse) protein is Alpha-1,6-mannosylglycoprotein 6-beta-N-acetylglucosaminyltransferase A (Mgat5).